We begin with the raw amino-acid sequence, 259 residues long: Ubiquinone biosynthesis protein COQ4 homolog, mitochondrial (259 aa).

The Zn(2+) site is built by His162, Asp163, His166, and Glu178.

It belongs to the COQ4 family. As to quaternary structure, component of a multi-subunit COQ enzyme complex. The cofactor is Zn(2+).

It localises to the mitochondrion inner membrane. It carries out the reaction a 4-hydroxy-3-methoxy-5-(all-trans-polyprenyl)benzoate + H(+) = a 2-methoxy-6-(all-trans-polyprenyl)phenol + CO2. It functions in the pathway cofactor biosynthesis; ubiquinone biosynthesis. Lyase that catalyzes the C1-decarboxylation of 4-hydroxy-3-methoxy-5-(all-trans-polyprenyl)benzoic acid into 2-methoxy-6-(all-trans-polyprenyl)phenol during ubiquinone biosynthesis. The sequence is that of Ubiquinone biosynthesis protein COQ4 homolog, mitochondrial from Bombyx mori (Silk moth).